A 717-amino-acid chain; its full sequence is Methionine--tRNA ligase (717 aa).

The short motif at 19–29 (PYANGDLHVGH) is the 'HIGH' region element. Positions 150, 153, 162, and 166 each coordinate Zn(2+). The short motif at 356–360 (ALSTS) is the 'KMSKS' region element. Thr-359 is an ATP binding site. The tract at residues 573-603 (ERVEEASEASAEASNEGGEAAGDEVDDGDVD) is disordered. The segment covering 580 to 590 (EASAEASNEGG) has biased composition (low complexity). A compositionally biased stretch (acidic residues) spans 593 to 603 (AGDEVDDGDVD). A tRNA-binding domain is found at 619–717 (DFEGVDMRVG…EDAPLGTRIK (99 aa)).

Belongs to the class-I aminoacyl-tRNA synthetase family. MetG type 1 subfamily. Homodimer. The cofactor is Zn(2+).

It localises to the cytoplasm. It carries out the reaction tRNA(Met) + L-methionine + ATP = L-methionyl-tRNA(Met) + AMP + diphosphate. Functionally, is required not only for elongation of protein synthesis but also for the initiation of all mRNA translation through initiator tRNA(fMet) aminoacylation. The polypeptide is Methionine--tRNA ligase (Haloarcula marismortui (strain ATCC 43049 / DSM 3752 / JCM 8966 / VKM B-1809) (Halobacterium marismortui)).